Reading from the N-terminus, the 194-residue chain is Peptidyl-tRNA hydrolase (194 aa).

Tyr17 is a tRNA binding site. The Proton acceptor role is filled by His22. Positions 69, 71, and 117 each coordinate tRNA.

Belongs to the PTH family. Monomer.

The protein resides in the cytoplasm. The enzyme catalyses an N-acyl-L-alpha-aminoacyl-tRNA + H2O = an N-acyl-L-amino acid + a tRNA + H(+). Its function is as follows. Hydrolyzes ribosome-free peptidyl-tRNAs (with 1 or more amino acids incorporated), which drop off the ribosome during protein synthesis, or as a result of ribosome stalling. In terms of biological role, catalyzes the release of premature peptidyl moieties from peptidyl-tRNA molecules trapped in stalled 50S ribosomal subunits, and thus maintains levels of free tRNAs and 50S ribosomes. This Renibacterium salmoninarum (strain ATCC 33209 / DSM 20767 / JCM 11484 / NBRC 15589 / NCIMB 2235) protein is Peptidyl-tRNA hydrolase.